Reading from the N-terminus, the 78-residue chain is Probable [Fe-S]-dependent transcriptional repressor (78 aa).

Iron-sulfur cluster contacts are provided by C56, C61, C64, and C70.

Belongs to the FeoC family.

In terms of biological role, may function as a transcriptional regulator that controls feoABC expression. The polypeptide is Probable [Fe-S]-dependent transcriptional repressor (Cronobacter sakazakii (strain ATCC BAA-894) (Enterobacter sakazakii)).